Consider the following 236-residue polypeptide: Purine nucleoside phosphorylase DeoD-type (236 aa).

Residue H5 participates in a purine D-ribonucleoside binding. Residues G21, R25, R44, and 88–91 (RVGT) contribute to the phosphate site. Residues 180 to 182 (EME) and 204 to 205 (SD) each bind a purine D-ribonucleoside. The active-site Proton donor is the D205.

It belongs to the PNP/UDP phosphorylase family. In terms of assembly, homohexamer; trimer of homodimers.

It carries out the reaction a purine D-ribonucleoside + phosphate = a purine nucleobase + alpha-D-ribose 1-phosphate. It catalyses the reaction a purine 2'-deoxy-D-ribonucleoside + phosphate = a purine nucleobase + 2-deoxy-alpha-D-ribose 1-phosphate. Its function is as follows. Catalyzes the reversible phosphorolytic breakdown of the N-glycosidic bond in the beta-(deoxy)ribonucleoside molecules, with the formation of the corresponding free purine bases and pentose-1-phosphate. This is Purine nucleoside phosphorylase DeoD-type from Shewanella baltica (strain OS223).